A 319-amino-acid polypeptide reads, in one-letter code: MKKDDRLKKFKYKVAAFYNFISIIDEEILLIKEELTKLATNQKIKGTILLASEGVNGTICGPENAIVQFIETLEKLLKVSDINVKYSWSEKQAFRRFKARKKKEIVTIGLKEINPTKSVGKYIKAGEWNQFLEDPNSVVIDTRNEYEIKIGNFAGALNPQTSSFREFPAWVQKHLKPLIEENPSLKIGMYCTGGIRCEKATSYLIEEGFSDVHHLEGGILKYLEDVSSENSLWNGECFVFDQRVSLDHELLPGSHRMCHACGLPISPEDLKKPTYIKGLQCDACVNKFTDSDRARFAERQRQIDEIMKRLPENSIWPSS.

The region spanning 133–231 (EDPNSVVIDT…YLEDVSSENS (99 aa)) is the Rhodanese domain. The active-site Cysteine persulfide intermediate is Cys191.

It belongs to the TrhO family.

It catalyses the reaction uridine(34) in tRNA + AH2 + O2 = 5-hydroxyuridine(34) in tRNA + A + H2O. Its function is as follows. Catalyzes oxygen-dependent 5-hydroxyuridine (ho5U) modification at position 34 in tRNAs. This Prochlorococcus marinus (strain NATL2A) protein is tRNA uridine(34) hydroxylase.